Consider the following 82-residue polypeptide: ATP synthase subunit c, chloroplastic (82 aa).

Transmembrane regions (helical) follow at residues Ile4–Pro24 and Leu57–Ala77.

This sequence belongs to the ATPase C chain family. F-type ATPases have 2 components, F(1) - the catalytic core - and F(0) - the membrane proton channel. F(1) has five subunits: alpha(3), beta(3), gamma(1), delta(1), epsilon(1). F(0) has four main subunits: a(1), b(1), b'(1) and c(10-14). The alpha and beta chains form an alternating ring which encloses part of the gamma chain. F(1) is attached to F(0) by a central stalk formed by the gamma and epsilon chains, while a peripheral stalk is formed by the delta, b and b' chains.

It is found in the plastid. Its subcellular location is the chloroplast thylakoid membrane. Functionally, f(1)F(0) ATP synthase produces ATP from ADP in the presence of a proton or sodium gradient. F-type ATPases consist of two structural domains, F(1) containing the extramembraneous catalytic core and F(0) containing the membrane proton channel, linked together by a central stalk and a peripheral stalk. During catalysis, ATP synthesis in the catalytic domain of F(1) is coupled via a rotary mechanism of the central stalk subunits to proton translocation. In terms of biological role, key component of the F(0) channel; it plays a direct role in translocation across the membrane. A homomeric c-ring of between 10-14 subunits forms the central stalk rotor element with the F(1) delta and epsilon subunits. In Thalassiosira pseudonana (Marine diatom), this protein is ATP synthase subunit c, chloroplastic.